Reading from the N-terminus, the 368-residue chain is Probable leucine aminopeptidase ARB_03492 (368 aa).

The first 18 residues, 1 to 18, serve as a signal peptide directing secretion; the sequence is MKVSAIAAVAALAAVAVA. N-linked (GlcNAc...) asparagine glycosylation is present at Asn-92. 2 residues coordinate Zn(2+): His-172 and Asp-191. N-linked (GlcNAc...) asparagine glycans are attached at residues Asn-192 and Asn-216. The Zn(2+) site is built by Glu-230 and Asp-257. Cys-301 and Cys-305 are joined by a disulfide. Residue His-334 participates in Zn(2+) binding.

It belongs to the peptidase M28 family. M28E subfamily. As to quaternary structure, monomer. Zn(2+) is required as a cofactor.

It localises to the secreted. Functionally, probable extracellular aminopeptidase which contributes to pathogenicity. This chain is Probable leucine aminopeptidase ARB_03492, found in Arthroderma benhamiae (strain ATCC MYA-4681 / CBS 112371) (Trichophyton mentagrophytes).